Consider the following 316-residue polypeptide: Thymidylate synthase (316 aa).

DUMP-binding positions include R23 and 178–179; that span reads RR. C198 serves as the catalytic Nucleophile. DUMP-binding positions include 218-221, N229, and 259-261; these read RSGD and HIY. Position 221 (D221) interacts with (6R)-5,10-methylene-5,6,7,8-tetrahydrofolate. A (6R)-5,10-methylene-5,6,7,8-tetrahydrofolate-binding site is contributed by A315.

The protein belongs to the thymidylate synthase family. Bacterial-type ThyA subfamily. As to quaternary structure, homodimer.

The protein localises to the cytoplasm. The catalysed reaction is dUMP + (6R)-5,10-methylene-5,6,7,8-tetrahydrofolate = 7,8-dihydrofolate + dTMP. It participates in pyrimidine metabolism; dTTP biosynthesis. Catalyzes the reductive methylation of 2'-deoxyuridine-5'-monophosphate (dUMP) to 2'-deoxythymidine-5'-monophosphate (dTMP) while utilizing 5,10-methylenetetrahydrofolate (mTHF) as the methyl donor and reductant in the reaction, yielding dihydrofolate (DHF) as a by-product. This enzymatic reaction provides an intracellular de novo source of dTMP, an essential precursor for DNA biosynthesis. This chain is Thymidylate synthase, found in Latilactobacillus sakei subsp. sakei (strain 23K) (Lactobacillus sakei subsp. sakei).